A 331-amino-acid polypeptide reads, in one-letter code: DNA fragmentation factor subunit alpha (331 aa).

Met-1 bears the N-acetylmethionine mark. Residues 17–96 (TLKPCLLRRN…ALASNEKWAY (80 aa)) enclose the CIDE-N domain. Thr-243 is modified (phosphothreonine). The disordered stretch occupies residues 305–331 (SLRSISASKASPPGDLQNPKRARQDPT). Ser-315 is modified (phosphoserine).

Heterodimer of DFFA and DFFB. In terms of processing, caspase-3 cleaves DFF45 at 2 sites to generate an active factor.

It is found in the cytoplasm. Its function is as follows. Inhibitor of the caspase-activated DNase (DFF40). The sequence is that of DNA fragmentation factor subunit alpha (DFFA) from Homo sapiens (Human).